Here is a 461-residue protein sequence, read N- to C-terminus: Photosystem II CP43 reaction center protein (461 aa).

A propeptide spanning residues 1 to 2 (ME) is cleaved from the precursor. Residue Thr-3 is modified to N-acetylthreonine. Thr-3 bears the Phosphothreonine mark. 5 helical membrane-spanning segments follow: residues 57–81 (LFEV…PHLA), 122–143 (IIGP…KDKN), 166–188 (KAMF…RVIS), 243–263 (KPFS…LSYS), and 279–300 (WFNN…ASQA). [CaMn4O5] cluster is bound at residue Glu-355. A helical membrane pass occupies residues 435–459 (RARAASGGFEKGLDRENEPVLSMKL).

This sequence belongs to the PsbB/PsbC family. PsbC subfamily. PSII is composed of 1 copy each of membrane proteins PsbA, PsbB, PsbC, PsbD, PsbE, PsbF, PsbH, PsbI, PsbJ, PsbK, PsbL, PsbM, PsbT, PsbX, PsbY, PsbZ, Psb30/Ycf12, at least 3 peripheral proteins of the oxygen-evolving complex and a large number of cofactors. It forms dimeric complexes. Requires Binds multiple chlorophylls and provides some of the ligands for the Ca-4Mn-5O cluster of the oxygen-evolving complex. It may also provide a ligand for a Cl- that is required for oxygen evolution. PSII binds additional chlorophylls, carotenoids and specific lipids. as cofactor.

Its subcellular location is the plastid. It localises to the cyanelle thylakoid membrane. Its function is as follows. One of the components of the core complex of photosystem II (PSII). It binds chlorophyll and helps catalyze the primary light-induced photochemical processes of PSII. PSII is a light-driven water:plastoquinone oxidoreductase, using light energy to abstract electrons from H(2)O, generating O(2) and a proton gradient subsequently used for ATP formation. This is Photosystem II CP43 reaction center protein from Cyanophora paradoxa.